A 146-amino-acid polypeptide reads, in one-letter code: Ribosome-binding factor A (146 aa).

The interval 127 to 146 (EFAGEADPYKKPEDDEAAES) is disordered.

The protein belongs to the RbfA family. As to quaternary structure, monomer. Binds 30S ribosomal subunits, but not 50S ribosomal subunits or 70S ribosomes.

The protein resides in the cytoplasm. In terms of biological role, one of several proteins that assist in the late maturation steps of the functional core of the 30S ribosomal subunit. Associates with free 30S ribosomal subunits (but not with 30S subunits that are part of 70S ribosomes or polysomes). Required for efficient processing of 16S rRNA. May interact with the 5'-terminal helix region of 16S rRNA. In Renibacterium salmoninarum (strain ATCC 33209 / DSM 20767 / JCM 11484 / NBRC 15589 / NCIMB 2235), this protein is Ribosome-binding factor A.